Reading from the N-terminus, the 105-residue chain is ETYTVKLGSDKGLLVFEPAKLTIKPGDTVEFLNNKVPPHNVVFDAALNPAKSADLAKSLSHKQLLMSPGQSTSTTFPADAPAGEYTFYCEPHRGAGMVGKITVAG.

The Plastocyanin-like domain maps to 1-105 (ETYTVKLGSD…GMVGKITVAG (105 aa)). 4 residues coordinate Cu(2+): His39, Cys89, His92, and Met97.

This sequence belongs to the plastocyanin family. Cu(2+) is required as a cofactor.

The protein localises to the cellular thylakoid membrane. Functionally, participates in electron transfer between P700 and the cytochrome b6-f complex in photosystem I. This is Plastocyanin (petE) from Anabaena variabilis.